The primary structure comprises 87 residues: Large ribosomal subunit protein bL27 (87 aa).

It belongs to the bacterial ribosomal protein bL27 family.

This is Large ribosomal subunit protein bL27 from Stenotrophomonas maltophilia (strain R551-3).